A 511-amino-acid chain; its full sequence is Myrosinase 5 (511 aa).

A signal peptide spans 1-23; it reads MAIPKAHYSLAVLVLLFVVVSSS. 3 cysteine pairs are disulfide-bonded: C31–C450, C39–C445, and C230–C233. Residues N46 and N53 are each glycosylated (N-linked (GlcNAc...) asparagine). Residues Q64, H165, and 210 to 211 contribute to the a beta-D-glucoside site; that span reads NQ. N222 is a glycosylation site (N-linked (GlcNAc...) asparagine). A beta-D-glucoside is bound by residues Y351 and E418. E418 serves as the catalytic Nucleophile. N428 is a glycosylation site (N-linked (GlcNAc...) asparagine). A beta-D-glucoside contacts are provided by residues W467, 474-475, and F483; that span reads EF. The N-linked (GlcNAc...) asparagine glycan is linked to N489.

It belongs to the glycosyl hydrolase 1 family. As to expression, specifically expressed in roots.

The catalysed reaction is a thioglucoside + H2O = a sugar + a thiol.. It catalyses the reaction Hydrolysis of terminal, non-reducing beta-D-glucosyl residues with release of beta-D-glucose.. Hydrolyzes sinigrin and, with lower efficiency, p-nitrophenyl beta-D-glucoside. The chain is Myrosinase 5 from Arabidopsis thaliana (Mouse-ear cress).